A 279-amino-acid polypeptide reads, in one-letter code: Proteasome subunit beta (279 aa).

Residues 1–53 (MAAAFDPSGRLPDLFTSAGTSSFSAFLSMAAPELLPGRRPLPPGTAADLTPHA) constitute a propeptide, removed in mature form; by autocatalysis. The Nucleophile role is filled by threonine 54.

The protein belongs to the peptidase T1B family. The 20S proteasome core is composed of 14 alpha and 14 beta subunits that assemble into four stacked heptameric rings, resulting in a barrel-shaped structure. The two inner rings, each composed of seven catalytic beta subunits, are sandwiched by two outer rings, each composed of seven alpha subunits. The catalytic chamber with the active sites is on the inside of the barrel. Has a gated structure, the ends of the cylinder being occluded by the N-termini of the alpha-subunits. Is capped by the proteasome-associated ATPase, ARC.

It localises to the cytoplasm. The enzyme catalyses Cleavage of peptide bonds with very broad specificity.. It functions in the pathway protein degradation; proteasomal Pup-dependent pathway. With respect to regulation, the formation of the proteasomal ATPase ARC-20S proteasome complex, likely via the docking of the C-termini of ARC into the intersubunit pockets in the alpha-rings, may trigger opening of the gate for substrate entry. Interconversion between the open-gate and close-gate conformations leads to a dynamic regulation of the 20S proteasome proteolysis activity. Functionally, component of the proteasome core, a large protease complex with broad specificity involved in protein degradation. The sequence is that of Proteasome subunit beta from Salinispora arenicola (strain CNS-205).